The primary structure comprises 261 residues: Cytochrome c oxidase subunit 3 (261 aa).

The Mitochondrial matrix portion of the chain corresponds to 1 to 15 (MAHQAHPYHMVDPSP). Residues 16–34 (WPLTGATAALLMTSGLAIW) traverse the membrane as a helical segment. Topologically, residues 35-40 (FHFHSL) are mitochondrial intermembrane. A helical transmembrane segment spans residues 41-66 (LLLYLGLTLLLLTMIQWWRDIIREGT). Topologically, residues 67 to 72 (FQGHHT) are mitochondrial matrix. Residues 73-105 (PPVQKGLRYGMILFIVSEVFFFLGFFWAFYHSS) traverse the membrane as a helical segment. Over 106 to 128 (LAPTPELGGCWPPTGINPLDPFE) the chain is Mitochondrial intermembrane. Residues 129–152 (VPLLNTAVLLASGVTVTWAHHGLM) traverse the membrane as a helical segment. The Mitochondrial matrix segment spans residues 153–155 (EGN). The helical transmembrane segment at 156 to 183 (RKEAIQALTLTIILGVYFTALQAMEYYE) threads the bilayer. Residues 184–190 (APFTIAD) are Mitochondrial intermembrane-facing. A helical transmembrane segment spans residues 191 to 223 (GVYGTTFFVATGFHGLHVIIGSTFLAVCLLRQV). Over 224 to 232 (LYHFTSEHH) the chain is Mitochondrial matrix. Residues 233–256 (FGFEAAAWYWHFVDVVWLFLYVSI) form a helical membrane-spanning segment. The Mitochondrial intermembrane portion of the chain corresponds to 257–261 (YWWGS).

It belongs to the cytochrome c oxidase subunit 3 family. Component of the cytochrome c oxidase (complex IV, CIV), a multisubunit enzyme composed of 14 subunits. The complex is composed of a catalytic core of 3 subunits MT-CO1, MT-CO2 and MT-CO3, encoded in the mitochondrial DNA, and 11 supernumerary subunits COX4I, COX5A, COX5B, COX6A, COX6B, COX6C, COX7A, COX7B, COX7C, COX8 and NDUFA4, which are encoded in the nuclear genome. The complex exists as a monomer or a dimer and forms supercomplexes (SCs) in the inner mitochondrial membrane with NADH-ubiquinone oxidoreductase (complex I, CI) and ubiquinol-cytochrome c oxidoreductase (cytochrome b-c1 complex, complex III, CIII), resulting in different assemblies (supercomplex SCI(1)III(2)IV(1) and megacomplex MCI(2)III(2)IV(2)).

It is found in the mitochondrion inner membrane. The catalysed reaction is 4 Fe(II)-[cytochrome c] + O2 + 8 H(+)(in) = 4 Fe(III)-[cytochrome c] + 2 H2O + 4 H(+)(out). In terms of biological role, component of the cytochrome c oxidase, the last enzyme in the mitochondrial electron transport chain which drives oxidative phosphorylation. The respiratory chain contains 3 multisubunit complexes succinate dehydrogenase (complex II, CII), ubiquinol-cytochrome c oxidoreductase (cytochrome b-c1 complex, complex III, CIII) and cytochrome c oxidase (complex IV, CIV), that cooperate to transfer electrons derived from NADH and succinate to molecular oxygen, creating an electrochemical gradient over the inner membrane that drives transmembrane transport and the ATP synthase. Cytochrome c oxidase is the component of the respiratory chain that catalyzes the reduction of oxygen to water. Electrons originating from reduced cytochrome c in the intermembrane space (IMS) are transferred via the dinuclear copper A center (CU(A)) of subunit 2 and heme A of subunit 1 to the active site in subunit 1, a binuclear center (BNC) formed by heme A3 and copper B (CU(B)). The BNC reduces molecular oxygen to 2 water molecules using 4 electrons from cytochrome c in the IMS and 4 protons from the mitochondrial matrix. This chain is Cytochrome c oxidase subunit 3 (MT-CO3), found in Scyliorhinus canicula (Small-spotted catshark).